A 437-amino-acid chain; its full sequence is Carboxypeptidase A6 (437 aa).

A signal peptide spans 1–30 (MKCLGKRRGQAAAFLPLCWLFLKILQPGHS). The propeptide at 31-129 (HLYNNRYAGD…SSLHTQRNRR (99 aa)) is activation peptide. Residues Asn-89 and Asn-153 are each glycosylated (N-linked (GlcNAc...) asparagine). Positions 138–432 (VYHSLEEIQN…LAVKNITMHL (295 aa)) constitute a Peptidase M14 domain. His-196 and Glu-199 together coordinate Zn(2+). Residues 196–199 (HARE), Arg-254, and 271–272 (NR) each bind substrate. A disulfide bridge links Cys-265 with Cys-288. His-324 is a binding site for Zn(2+). Substrate is bound by residues 325–326 (AY) and Tyr-376. Catalysis depends on Glu-398, which acts as the Proton donor/acceptor. An N-linked (GlcNAc...) asparagine glycan is attached at Asn-427.

Belongs to the peptidase M14 family. The cofactor is Zn(2+). In terms of tissue distribution, expressed in the hippocampus, nucleus raphe, and cortex.

The protein resides in the secreted. Its subcellular location is the extracellular space. It is found in the extracellular matrix. Its function is as follows. May be involved in the proteolytic inactivation of enkephalins and neurotensin in some brain areas. May convert inactive angiotensin I into the biologically active angiotensin II. Releases a C-terminal amino acid, with preference for large hydrophobic C-terminal amino acids and shows only very weak activity toward small amino acids and histidine. In Homo sapiens (Human), this protein is Carboxypeptidase A6 (CPA6).